The primary structure comprises 509 residues: Maturase K (509 aa).

It belongs to the intron maturase 2 family. MatK subfamily.

The protein localises to the plastid. Its subcellular location is the chloroplast. Its function is as follows. Usually encoded in the trnK tRNA gene intron. Probably assists in splicing its own and other chloroplast group II introns. In Nicotiana paniculata, this protein is Maturase K.